Here is a 466-residue protein sequence, read N- to C-terminus: Ribulose bisphosphate carboxylase large chain (466 aa).

At Lys-5 the chain carries N6,N6,N6-trimethyllysine. Residues Asn-114 and Thr-164 each coordinate substrate. Catalysis depends on Lys-166, which acts as the Proton acceptor. Residue Lys-168 participates in substrate binding. Lys-192, Asp-194, and Glu-195 together coordinate Mg(2+). N6-carboxylysine is present on Lys-192. The active-site Proton acceptor is the His-285. Substrate is bound by residues Arg-286, His-318, and Ser-370.

This sequence belongs to the RuBisCO large chain family. Type I subfamily. In terms of assembly, heterohexadecamer of 8 large chains and 8 small chains; disulfide-linked. The disulfide link is formed within the large subunit homodimers. It depends on Mg(2+) as a cofactor. In terms of processing, the disulfide bond which can form in the large chain dimeric partners within the hexadecamer appears to be associated with oxidative stress and protein turnover.

It is found in the plastid. The protein resides in the chloroplast. It carries out the reaction 2 (2R)-3-phosphoglycerate + 2 H(+) = D-ribulose 1,5-bisphosphate + CO2 + H2O. It catalyses the reaction D-ribulose 1,5-bisphosphate + O2 = 2-phosphoglycolate + (2R)-3-phosphoglycerate + 2 H(+). In terms of biological role, ruBisCO catalyzes two reactions: the carboxylation of D-ribulose 1,5-bisphosphate, the primary event in carbon dioxide fixation, as well as the oxidative fragmentation of the pentose substrate in the photorespiration process. Both reactions occur simultaneously and in competition at the same active site. This chain is Ribulose bisphosphate carboxylase large chain, found in Adoxa moschatellina (Moschatel).